Consider the following 855-residue polypeptide: Suppressor of tumorigenicity 14 protein homolog (855 aa).

Residues 1–21 form a disordered region; the sequence is MKSERARRGAGGSGDLGAGFK. Residues 1-55 lie on the Cytoplasmic side of the membrane; that stretch reads MKSERARRGAGGSGDLGAGFKYTSRPENMNGCEEGVEFLPANNSSKVEKGGPRRW. Ser-13 carries the phosphoserine modification. The helical; Signal-anchor for type II membrane protein transmembrane segment at 56 to 76 threads the bilayer; that stretch reads VVLMAVLAAFLALSLLAGLLA. At 77 to 855 the chain is on the extracellular side; that stretch reads WHFQDRNVRV…RDWIKAQIGV (779 aa). The SEA domain maps to 86 to 203; sequence VQKIFNGYLS…TSVVAFPSDP (118 aa). N-linked (GlcNAc...) asparagine glycosylation occurs at Asn-109. Cysteines 214 and 244 form a disulfide. CUB domains follow at residues 214-334 and 340-447; these read CSFA…FFQL and CGGY…FLSF. Residues Asn-302 and Asn-365 are each glycosylated (N-linked (GlcNAc...) asparagine). Intrachain disulfides connect Cys-340/Cys-366, Cys-397/Cys-410, Cys-453/Cys-464, Cys-459/Cys-477, Cys-471/Cys-486, Cys-488/Cys-501, Cys-496/Cys-514, Cys-508/Cys-523, Cys-525/Cys-537, Cys-532/Cys-550, Cys-544/Cys-559, Cys-567/Cys-579, Cys-574/Cys-593, Cys-587/Cys-602, and Cys-641/Cys-657. 4 consecutive LDL-receptor class A domains span residues 452-487, 487-524, 524-560, and 566-603; these read PCPG…LDCK, KCNA…EGCS, SCPP…AKCQ, and PCTE…KDCD. N-linked (GlcNAc...) asparagine glycosylation is present at Asn-489. The Peptidase S1 domain maps to 615–854; the sequence is VVGGENSDQG…FRDWIKAQIG (240 aa). Residues His-656 and Asp-711 each act as charge relay system in the active site. An N-linked (GlcNAc...) asparagine glycan is attached at Asn-772. 2 disulfide bridges follow: Cys-776–Cys-790 and Cys-801–Cys-830. Ser-805 serves as the catalytic Charge relay system.

It belongs to the peptidase S1 family. In terms of assembly, interacts with CDCP1. May interact with TMEFF1.

The protein resides in the membrane. It carries out the reaction Cleaves various synthetic substrates with Arg or Lys at the P1 position and prefers small side-chain amino acids, such as Ala and Gly, at the P2 position.. Its function is as follows. Exhibits trypsin-like activity as defined by cleavage of synthetic substrates with Arg or Lys as the P1 site. Involved in the terminal differentiation of keratinocytes through prostasin (PRSS8) activation and filaggrin (FLG) processing. Proteolytically cleaves and therefore activates TMPRSS13. The sequence is that of Suppressor of tumorigenicity 14 protein homolog (ST14) from Bos taurus (Bovine).